A 166-amino-acid chain; its full sequence is MNKTIYIAAGCFWGGEKYFSLIHGVLSTKVGYANGTTSNPTYEEVCHNNTGHAETVEIQYDDSILPLEKLLRLYYEVIDPTSVNKQGGDQGIQYRTGIYYIDEADLEIIKPSLEELAKKYDKPIAIEVKQLLHFYDAEEYHQKYLDKNPSGYCHIGQCAFDSAKNA.

Residue Cys-11 is part of the active site.

Belongs to the MsrA Met sulfoxide reductase family.

The enzyme catalyses L-methionyl-[protein] + [thioredoxin]-disulfide + H2O = L-methionyl-(S)-S-oxide-[protein] + [thioredoxin]-dithiol. It catalyses the reaction [thioredoxin]-disulfide + L-methionine + H2O = L-methionine (S)-S-oxide + [thioredoxin]-dithiol. In terms of biological role, has an important function as a repair enzyme for proteins that have been inactivated by oxidation. Catalyzes the reversible oxidation-reduction of methionine sulfoxide in proteins to methionine. This is Peptide methionine sulfoxide reductase MsrA from Lachnoclostridium phytofermentans (strain ATCC 700394 / DSM 18823 / ISDg) (Clostridium phytofermentans).